A 451-amino-acid chain; its full sequence is UPF0210 protein NMA1908 (451 aa).

This sequence belongs to the UPF0210 family. As to quaternary structure, homodimer.

This is UPF0210 protein NMA1908 from Neisseria meningitidis serogroup A / serotype 4A (strain DSM 15465 / Z2491).